The primary structure comprises 565 residues: Wee1-like protein kinase 2 (565 aa).

Composition is skewed to basic and acidic residues over residues 1–12 (MGDNGDNKELKQ) and 26–52 (EGQK…DSEA). Disordered regions lie at residues 1–142 (MGDN…TPGP) and 169–189 (KSNG…EEGK). Ser-77 bears the Phosphoserine mark. The short motif at 173–175 (KRK) is the Nuclear localization signal element. A compositionally biased stretch (basic and acidic residues) spans 178-189 (RDLEEAGPEEGK). The 279-residue stretch at 214 to 492 (FLEVEKIGVG…TRSRVLCPSL (279 aa)) folds into the Protein kinase domain. ATP-binding positions include 220-228 (IGVGEFGTV) and Lys-243. The Nuclear export signal motif lies at 317–331 (KLKDILLQISLGLKY). The active-site Proton acceptor is the Asp-341. The Mg(2+) site is built by Asn-346 and Asp-382. Residues 495 to 521 (TEELQQQLNLEKFKTATLERELKEVQR) adopt a coiled-coil conformation. Residues 518–565 (EVQRAQSSKEGQSSPGVTGTHTGSRSTRRLVGGKSAKSSSFTWGQSSP) form a disordered region. 2 stretches are compositionally biased toward polar residues: residues 521–534 (RAQS…SPGV) and 553–565 (AKSS…QSSP).

Belongs to the protein kinase superfamily. Ser/Thr protein kinase family. WEE1 subfamily. In terms of processing, phosphorylation leads to increase its activity. As to expression, ovary-specific.

It localises to the nucleus. It catalyses the reaction L-tyrosyl-[protein] + ATP = O-phospho-L-tyrosyl-[protein] + ADP + H(+). Functionally, oocyte-specific protein tyrosine kinase that phosphorylates and inhibits CDK1 and acts as a key regulator of meiosis during both prophase I and metaphase II. Required to maintain meiotic arrest in oocytes during the germinal vesicle (GV) stage, a long period of quiescence at dictyate prophase I, by phosphorylating CDK1 at 'Tyr-15', leading to inhibit CDK1 activity and prevent meiotic reentry. Also required for metaphase II exit during egg activation by phosphorylating CDK1 at 'Tyr-15', to ensure exit from meiosis in oocytes and promote pronuclear formation. This Sus scrofa (Pig) protein is Wee1-like protein kinase 2 (WEE2).